A 78-amino-acid polypeptide reads, in one-letter code: DNA gyrase inhibitor YacG (78 aa).

4 residues coordinate Zn(2+): cysteine 7, cysteine 10, cysteine 26, and cysteine 30.

This sequence belongs to the DNA gyrase inhibitor YacG family. As to quaternary structure, interacts with GyrB. Requires Zn(2+) as cofactor.

Functionally, inhibits all the catalytic activities of DNA gyrase by preventing its interaction with DNA. Acts by binding directly to the C-terminal domain of GyrB, which probably disrupts DNA binding by the gyrase. This is DNA gyrase inhibitor YacG from Shewanella piezotolerans (strain WP3 / JCM 13877).